Reading from the N-terminus, the 308-residue chain is tRNA pseudouridine synthase B (308 aa).

Aspartate 49 (nucleophile) is an active-site residue.

The protein belongs to the pseudouridine synthase TruB family. Type 1 subfamily.

The enzyme catalyses uridine(55) in tRNA = pseudouridine(55) in tRNA. In terms of biological role, responsible for synthesis of pseudouridine from uracil-55 in the psi GC loop of transfer RNAs. The sequence is that of tRNA pseudouridine synthase B from Corynebacterium jeikeium (strain K411).